Consider the following 165-residue polypeptide: Large ribosomal subunit protein uL10 (165 aa).

Belongs to the universal ribosomal protein uL10 family. As to quaternary structure, part of the ribosomal stalk of the 50S ribosomal subunit. The N-terminus interacts with L11 and the large rRNA to form the base of the stalk. The C-terminus forms an elongated spine to which L12 dimers bind in a sequential fashion forming a multimeric L10(L12)X complex.

Forms part of the ribosomal stalk, playing a central role in the interaction of the ribosome with GTP-bound translation factors. This is Large ribosomal subunit protein uL10 from Citrobacter koseri (strain ATCC BAA-895 / CDC 4225-83 / SGSC4696).